The chain runs to 219 residues: Guanylate kinase (219 aa).

A Guanylate kinase-like domain is found at 15–194 (GLMFVLSSPS…AFAEVQSILK (180 aa)). 22-29 (SPSGAGKT) serves as a coordination point for ATP.

It belongs to the guanylate kinase family.

It is found in the cytoplasm. It carries out the reaction GMP + ATP = GDP + ADP. Its function is as follows. Essential for recycling GMP and indirectly, cGMP. The chain is Guanylate kinase from Nitrobacter winogradskyi (strain ATCC 25391 / DSM 10237 / CIP 104748 / NCIMB 11846 / Nb-255).